A 459-amino-acid chain; its full sequence is ATP synthase subunit beta (459 aa).

Position 149–156 (149–156) interacts with ATP; that stretch reads GGAGVGKT.

This sequence belongs to the ATPase alpha/beta chains family. In terms of assembly, F-type ATPases have 2 components, CF(1) - the catalytic core - and CF(0) - the membrane proton channel. CF(1) has five subunits: alpha(3), beta(3), gamma(1), delta(1), epsilon(1). CF(0) has three main subunits: a(1), b(2) and c(9-12). The alpha and beta chains form an alternating ring which encloses part of the gamma chain. CF(1) is attached to CF(0) by a central stalk formed by the gamma and epsilon chains, while a peripheral stalk is formed by the delta and b chains.

It is found in the cell inner membrane. It carries out the reaction ATP + H2O + 4 H(+)(in) = ADP + phosphate + 5 H(+)(out). Its function is as follows. Produces ATP from ADP in the presence of a proton gradient across the membrane. The catalytic sites are hosted primarily by the beta subunits. The chain is ATP synthase subunit beta from Pseudomonas syringae pv. tomato (strain ATCC BAA-871 / DC3000).